Reading from the N-terminus, the 88-residue chain is Homeobox protein knotted-1-like 2 (88 aa).

The ELK domain occupies 4–24; the sequence is ELKHELKQGYRDKLVDIREEI. The segment at residues 25 to 88 is a DNA-binding region (homeobox; TALE-type); it reads LRKRRAGKLP…NQRKRNWHNN (64 aa).

This sequence belongs to the TALE/KNOX homeobox family. Expressed in all tissues examined. Highest expression in leaves.

The protein resides in the nucleus. The sequence is that of Homeobox protein knotted-1-like 2 (KNOX2) from Zea mays (Maize).